Consider the following 407-residue polypeptide: Biflaviolin synthase CYP158A1 (407 aa).

A compositionally biased stretch (polar residues) spans 1 to 11; the sequence is MTQETTTLTGQ. The segment at 1–20 is disordered; that stretch reads MTQETTTLTGQSPPPVRDWP. Residues Arg92, Tyr199, and 290 to 291 contribute to the flaviolin site; that span reads HR. Cys356 is a binding site for heme.

The protein belongs to the cytochrome P450 family. Heme is required as a cofactor.

It catalyses the reaction 2 flaviolin + 2 reduced [2Fe-2S]-[ferredoxin] + O2 + H(+) = 3,3'-biflaviolin + 2 oxidized [2Fe-2S]-[ferredoxin] + 2 H2O. The catalysed reaction is 2 flaviolin + 2 reduced [2Fe-2S]-[ferredoxin] + O2 + H(+) = 3,8'-biflaviolin + 2 oxidized [2Fe-2S]-[ferredoxin] + 2 H2O. It participates in pigment biosynthesis. Its function is as follows. Catalyzes oxidative C-C coupling reaction to polymerize flaviolin and form highly conjugated pigments which protect the soil bacterium from deleterious effects of UV irradiation (two isomers of biflaviolin and one triflaviolin). This is Biflaviolin synthase CYP158A1 from Streptomyces coelicolor (strain ATCC BAA-471 / A3(2) / M145).